The chain runs to 322 residues: Gas vesicle protein L (322 aa).

The disordered stretch occupies residues 1-85 (MTEQSSGSAT…SEQATVDWST (85 aa)). Over residues 17 to 36 (ETAKQETGRKNEQPEERTVT) the composition is skewed to basic and acidic residues. Residues 45–57 (INTTTAESETGSE) show a composition bias toward polar residues. Residues 58 to 72 (QESKAGSEQESKAGS) show a composition bias toward basic and acidic residues. The span at 73-85 (EQESEQATVDWST) shows a compositional bias: polar residues.

This sequence belongs to the gas vesicle GvpF/GvpL family. As to quaternary structure, gvpF to GvpM interact with each other in vitro, and may form multi-subunit complex(es). Interacts with GvpC, GvpN and GvpO.

Its subcellular location is the gas vesicle. Proteins GvpF to GvpM might be involved in nucleating gas vesicle formation. A minor component of the gas vesicle. Gas vesicles are small, hollow, gas filled protein structures that are found in several microbial planktonic microorganisms. They allow positioning of halobacteria at the optimal depth for growth in the poorly aerated, shallow brine pools of their habitat. In terms of biological role, expression of a 9.5 kb mc-vac DNA fragment containing 2 divergently transcribed regions (gvpD-gvpE-gvpF-gvpG-gvpH-gvpI-gvpJ-gvpK-gvpL-gvpM and gvpA-gvpC-gvpN-gvpO) allows H.volcanii to produce gas vesicles. The polypeptide is Gas vesicle protein L (Haloferax mediterranei (strain ATCC 33500 / DSM 1411 / JCM 8866 / NBRC 14739 / NCIMB 2177 / R-4) (Halobacterium mediterranei)).